The chain runs to 433 residues: CinA-like protein (433 aa).

It belongs to the CinA family.

This Prochlorococcus marinus (strain MIT 9515) protein is CinA-like protein.